Consider the following 442-residue polypeptide: ATP-dependent RNA helicase SUB2-2 (442 aa).

A Q motif motif is present at residues 58–86; sequence TGFKDFLLKPELARAIIDCGFEHPSEVQQ. Positions 89–264 constitute a Helicase ATP-binding domain; that stretch reads IPQSIHGTDV…RRFLQNPLEI (176 aa). 102–109 serves as a coordination point for ATP; it reads AKSGLGKT. The short motif at 211-214 is the DECD box element; sequence DECD. One can recognise a Helicase C-terminal domain in the interval 292–437; the sequence is KLAQLLDDLE…EFPEEGIDPS (146 aa).

The protein belongs to the DEAD box helicase family. DECD subfamily.

It localises to the nucleus. It catalyses the reaction ATP + H2O = ADP + phosphate + H(+). In terms of biological role, ATP-binding RNA helicase involved in transcription elongation and required for the export of mRNA out of the nucleus. SUB2 also plays a role in pre-mRNA splicing and spliceosome assembly. May be involved in rDNA and telomeric silencing, and maintenance of genome integrity. In Vanderwaltozyma polyspora (strain ATCC 22028 / DSM 70294 / BCRC 21397 / CBS 2163 / NBRC 10782 / NRRL Y-8283 / UCD 57-17) (Kluyveromyces polysporus), this protein is ATP-dependent RNA helicase SUB2-2 (SUB2-2).